The following is a 405-amino-acid chain: Threonine synthase (405 aa).

Lys104 carries the post-translational modification N6-(pyridoxal phosphate)lysine. Residues Asn130, Gly231–Asn235, and Thr369 contribute to the pyridoxal 5'-phosphate site.

This sequence belongs to the threonine synthase family. Homotrimer. Pyridoxal 5'-phosphate is required as a cofactor.

The catalysed reaction is O-phospho-L-homoserine + H2O = L-threonine + phosphate. The protein operates within amino-acid biosynthesis; L-threonine biosynthesis; L-threonine from L-aspartate: step 5/5. Its function is as follows. Catalyzes the gamma-elimination of phosphate from L-phosphohomoserine and the beta-addition of water to produce L-threonine. Does not catalyze the conversion of O-acetyl-L-homoserine into threonine. This is Threonine synthase (thrC) from Methanosarcina acetivorans (strain ATCC 35395 / DSM 2834 / JCM 12185 / C2A).